The primary structure comprises 988 residues: Isoleucine--tRNA ligase (988 aa).

A 'HIGH' region motif is present at residues 60–70 (PYANGALHMGH). L-isoleucyl-5'-AMP is bound at residue glutamate 570. The 'KMSKS' region motif lies at 611 to 615 (KMSKS). Lysine 614 serves as a coordination point for ATP. Positions 957, 960, 977, and 980 each coordinate Zn(2+).

The protein belongs to the class-I aminoacyl-tRNA synthetase family. IleS type 1 subfamily. As to quaternary structure, monomer. Requires Zn(2+) as cofactor.

Its subcellular location is the cytoplasm. The catalysed reaction is tRNA(Ile) + L-isoleucine + ATP = L-isoleucyl-tRNA(Ile) + AMP + diphosphate. Functionally, catalyzes the attachment of isoleucine to tRNA(Ile). As IleRS can inadvertently accommodate and process structurally similar amino acids such as valine, to avoid such errors it has two additional distinct tRNA(Ile)-dependent editing activities. One activity is designated as 'pretransfer' editing and involves the hydrolysis of activated Val-AMP. The other activity is designated 'posttransfer' editing and involves deacylation of mischarged Val-tRNA(Ile). The polypeptide is Isoleucine--tRNA ligase (Synechocystis sp. (strain ATCC 27184 / PCC 6803 / Kazusa)).